We begin with the raw amino-acid sequence, 422 residues long: UDP-N-acetylmuramoylalanine--D-glutamate ligase (422 aa).

102-108 (GTNGKTT) provides a ligand contact to ATP.

It belongs to the MurCDEF family.

The protein resides in the cytoplasm. The enzyme catalyses UDP-N-acetyl-alpha-D-muramoyl-L-alanine + D-glutamate + ATP = UDP-N-acetyl-alpha-D-muramoyl-L-alanyl-D-glutamate + ADP + phosphate + H(+). Its pathway is cell wall biogenesis; peptidoglycan biosynthesis. Functionally, cell wall formation. Catalyzes the addition of glutamate to the nucleotide precursor UDP-N-acetylmuramoyl-L-alanine (UMA). The chain is UDP-N-acetylmuramoylalanine--D-glutamate ligase from Helicobacter pylori (strain HPAG1).